The sequence spans 98 residues: Cystatin-B (98 aa).

Position 1 is an N-acetylmethionine (Met-1). The short motif at Gln-46–Gly-50 is the Secondary area of contact element.

This sequence belongs to the cystatin family. As to quaternary structure, able to form dimers stabilized by noncovalent forces.

It localises to the cytoplasm. Its subcellular location is the nucleus. In terms of biological role, this is an intracellular thiol proteinase inhibitor. Tightly binding reversible inhibitor of cathepsins L, H and B. The sequence is that of Cystatin-B (CSTB) from Macaca fuscata fuscata (Japanese macaque).